We begin with the raw amino-acid sequence, 227 residues long: tRNA (guanine-N(1)-)-methyltransferase (227 aa).

S-adenosyl-L-methionine is bound by residues glycine 112 and 131–136; that span reads LGDFVL.

This sequence belongs to the RNA methyltransferase TrmD family. In terms of assembly, homodimer.

It localises to the cytoplasm. The catalysed reaction is guanosine(37) in tRNA + S-adenosyl-L-methionine = N(1)-methylguanosine(37) in tRNA + S-adenosyl-L-homocysteine + H(+). Specifically methylates guanosine-37 in various tRNAs. This chain is tRNA (guanine-N(1)-)-methyltransferase, found in Trichodesmium erythraeum (strain IMS101).